The sequence spans 173 residues: NADH-quinone oxidoreductase subunit B 2 (173 aa).

Residues Cys42, Cys43, Cys107, and Cys137 each coordinate [4Fe-4S] cluster.

It belongs to the complex I 20 kDa subunit family. In terms of assembly, NDH-1 is composed of 14 different subunits. Subunits NuoB, C, D, E, F, and G constitute the peripheral sector of the complex. [4Fe-4S] cluster serves as cofactor.

It localises to the cell inner membrane. The enzyme catalyses a quinone + NADH + 5 H(+)(in) = a quinol + NAD(+) + 4 H(+)(out). Its function is as follows. NDH-1 shuttles electrons from NADH, via FMN and iron-sulfur (Fe-S) centers, to quinones in the respiratory chain. Couples the redox reaction to proton translocation (for every two electrons transferred, four hydrogen ions are translocated across the cytoplasmic membrane), and thus conserves the redox energy in a proton gradient. The polypeptide is NADH-quinone oxidoreductase subunit B 2 (Anaeromyxobacter dehalogenans (strain 2CP-C)).